The chain runs to 349 residues: Twinfilin-2 (349 aa).

ADF-H domains follow at residues 4-139 and 177-313; these read QTGI…KHVS and GLAF…DEVH. A disordered region spans residues 324–349; sequence AKPKGPVGKRGQKRLIKGPGENGEDS.

This sequence belongs to the actin-binding proteins ADF family. Twinfilin subfamily. As to quaternary structure, interacts with G-actin; ADP-actin form and capping protein (CP).

The protein localises to the cytoplasm. It localises to the cytoskeleton. The protein resides in the perinuclear region. In terms of biological role, actin-binding protein involved in motile and morphological processes. Inhibits actin polymerization, likely by sequestering G-actin. The chain is Twinfilin-2 (TWF2) from Gallus gallus (Chicken).